The chain runs to 313 residues: D-apiose import binding protein (313 aa).

A signal peptide spans 1–26 (MKLTRRLTLAAFASVLALGTAAPAFS). D-apiofuranose contacts are provided by residues Asn39, 115 to 116 (DR), 162 to 164 (DTN), Arg168, Asn218, Asp243, and Gln263.

Belongs to the bacterial solute-binding protein 2 family.

The protein localises to the periplasm. Functionally, part of an ABC transporter complex involved in D-apiose import. In Rhizobium rhizogenes (strain K84 / ATCC BAA-868) (Agrobacterium radiobacter), this protein is D-apiose import binding protein.